We begin with the raw amino-acid sequence, 173 residues long: Adenine phosphoribosyltransferase (173 aa).

Belongs to the purine/pyrimidine phosphoribosyltransferase family. Homodimer.

Its subcellular location is the cytoplasm. The catalysed reaction is AMP + diphosphate = 5-phospho-alpha-D-ribose 1-diphosphate + adenine. Its pathway is purine metabolism; AMP biosynthesis via salvage pathway; AMP from adenine: step 1/1. Catalyzes a salvage reaction resulting in the formation of AMP, that is energically less costly than de novo synthesis. The chain is Adenine phosphoribosyltransferase from Thermotoga maritima (strain ATCC 43589 / DSM 3109 / JCM 10099 / NBRC 100826 / MSB8).